The chain runs to 323 residues: Beta-ketoacyl-[acyl-carrier-protein] synthase III (323 aa).

Residues Cys-113 and His-250 contribute to the active site. Positions 251 to 255 (QANKR) are ACP-binding. Asn-280 is a catalytic residue.

Belongs to the thiolase-like superfamily. FabH family. Homodimer.

Its subcellular location is the cytoplasm. The catalysed reaction is malonyl-[ACP] + acetyl-CoA + H(+) = 3-oxobutanoyl-[ACP] + CO2 + CoA. Its pathway is lipid metabolism; fatty acid biosynthesis. Functionally, catalyzes the condensation reaction of fatty acid synthesis by the addition to an acyl acceptor of two carbons from malonyl-ACP. Catalyzes the first condensation reaction which initiates fatty acid synthesis and may therefore play a role in governing the total rate of fatty acid production. Possesses both acetoacetyl-ACP synthase and acetyl transacylase activities. Its substrate specificity determines the biosynthesis of branched-chain and/or straight-chain of fatty acids. The sequence is that of Beta-ketoacyl-[acyl-carrier-protein] synthase III from Agrobacterium fabrum (strain C58 / ATCC 33970) (Agrobacterium tumefaciens (strain C58)).